We begin with the raw amino-acid sequence, 90 residues long: Interferon alpha-inducible protein 27-like protein 2A (90 aa).

A signal peptide spans 1–24; it reads MLGTLFGSAIGGALAVAGAPVALA. 2 helical membrane-spanning segments follow: residues 28-48 and 67-89; these read FTGTGIAAASIAAKMMSAAAI and GVLGLSTSTNAILGAAGAAVGAL.

Belongs to the IFI6/IFI27 family. Homodimer. Interacts with SKP2. Interacts with NR4A1. May interact with BCL2.

Its subcellular location is the nucleus inner membrane. May be involved in the interferon-induced negative regulation of the transcriptional activity of NR4A1, NR4A2 and NR4A3 through the enhancement of XPO1-mediated nuclear export of these nuclear receptors. Through the regulation of NR4A1 transcriptional activity, may play a role in the vascular response to injury. The sequence is that of Interferon alpha-inducible protein 27-like protein 2A from Mus musculus (Mouse).